We begin with the raw amino-acid sequence, 726 residues long: Catalase-peroxidase (726 aa).

Residues 1–34 (MSMSDDTHNSLSTGKCPFHQGSHDRSAGAGTSSH) form a disordered region. A cross-link (tryptophyl-tyrosyl-methioninium (Trp-Tyr) (with M-252)) is located at residues 105–226 (WHGAGTYRSV…LGATEMGLIY (122 aa)). The active-site Proton acceptor is the His-106. The tryptophyl-tyrosyl-methioninium (Tyr-Met) (with W-105) cross-link spans 226 to 252 (YVNPEGPDHSGEPLSAAAAIRATFGNM). His-267 contributes to the heme b binding site.

The protein belongs to the peroxidase family. Peroxidase/catalase subfamily. As to quaternary structure, homodimer or homotetramer. It depends on heme b as a cofactor. In terms of processing, formation of the three residue Trp-Tyr-Met cross-link is important for the catalase, but not the peroxidase activity of the enzyme.

The catalysed reaction is H2O2 + AH2 = A + 2 H2O. It carries out the reaction 2 H2O2 = O2 + 2 H2O. Its function is as follows. Bifunctional enzyme with both catalase and broad-spectrum peroxidase activity. This Citrobacter koseri (strain ATCC BAA-895 / CDC 4225-83 / SGSC4696) protein is Catalase-peroxidase.